Reading from the N-terminus, the 114-residue chain is uncharacterized protein (114 aa).

The next 3 helical transmembrane spans lie at 38–60 (PLWFLTVTGILEIAGALAMTAGI), 64–86 (YAAIGAGVLFVVLMAGAIHAHMF), and 91–113 (SVIMAIQAMICLIVSIMIIMGSY).

The protein resides in the cell membrane. This is an uncharacterized protein from Bacillus subtilis (strain 168).